The primary structure comprises 346 residues: Iron uptake protein A2 (346 aa).

The tat-type signal signal peptide spans 1 to 31 (MTTKISRRTFFVGGTALTALVVANLPRRASA). The Fe cation site is built by His43, Tyr44, Tyr169, Tyr225, and Tyr226.

The protein belongs to the bacterial solute-binding protein 1 family. Predicted to be exported by the Tat system. The position of the signal peptide cleavage has not been experimentally proven.

It is found in the cellular thylakoid membrane. Its subcellular location is the periplasm. Probably part of a periplasmic ABC transporter complex futA1A2BC (TC 3.A.1.10.2) involved in Fe(3+) ion import (ferric iron). This protein and futA1 (slr1295) are subunit proteins that have redundant or overlapping substrate-binding functions. The differing subcellular locations of futA1 (predominantly thylakoid lumen) and futA2 (predominantly periplasmic) suggest they may fulfill different roles. Its function is as follows. Plays an important role in protecting the acceptor side of photosystem II (PSII) against oxidative damage, especially under iron-limiting growth conditions. Functionally, plays an undefined role in copper supply to thylakoid proteins. This chain is Iron uptake protein A2 (futA2), found in Synechocystis sp. (strain ATCC 27184 / PCC 6803 / Kazusa).